The primary structure comprises 348 residues: Ninja-family protein AFP2 (348 aa).

Positions 186–272 (DSDGGGATGG…VDRKGKGMAT (87 aa)) are disordered. The segment covering 187-197 (SDGGGATGGGS) has biased composition (gly residues). Composition is skewed to polar residues over residues 207 to 216 (KNQQGSSNSC) and 228 to 244 (CSSN…SVTR). Residues 247–267 (KVNENENEKRVRSEDSVDRKG) show a composition bias toward basic and acidic residues.

It belongs to the Ninja family. Forms a homodimer and heterodimer with AFP1 and AFP3. Interacts with ABI5/DPBF1, DPBF2, AREB3/DPBF3, EEL/DPBF4, ABF1, ABF3/DPBF5 and ABF4/AREB2.

The protein resides in the nucleus. Functionally, acts as a negative regulator of abscisic acid (ABA) response during germination through the ubiquitin-mediated proteolysis of ABI5/DPBF1. The protein is Ninja-family protein AFP2 (AFP2) of Arabidopsis thaliana (Mouse-ear cress).